Reading from the N-terminus, the 1142-residue chain is Melanoma-associated antigen C1 (1142 aa).

Residues 1-132 (MGDKDMPTAG…DVQSPLQNPA (132 aa)) form a disordered region. The span at 13 to 42 (SLLQSSSESPQSCPEGEDSQSPLQIPQSSP) shows a compositional bias: low complexity. Position 63 is a phosphoserine (Ser-63). Residues 76–87 (SQSPLQIPQSSP) are compositionally biased toward low complexity. Polar residues predominate over residues 92-103 (TQSPLQNSQSSP). Phosphoserine is present on residues Ser-207 and Ser-382. Disordered stretches follow at residues 502 to 778 (TQST…LQRP) and 791 to 893 (LQSS…SLTD). Residues 614–626 (SPLQGEEFQSSLQ) are compositionally biased toward polar residues. The segment covering 627-659 (SPVSICSSSTPSSLPQSFPESSQSPPEGPVQSP) has biased composition (low complexity). Over residues 671-680 (HSQSPLQSPE) the composition is skewed to polar residues. Low complexity-rich tracts occupy residues 741-762 (QSPVSICSSSTSLSLPQSFPES) and 807-889 (QSPL…LESD). One can recognise an MAGE domain in the interval 908 to 1106 (LDEKVDELAR…ITFPSSYKDA (199 aa)). Ser-1063 is subject to Phosphoserine. The tract at residues 1118 to 1142 (IDTTDDSTATESASSSVMSPSFSSE) is disordered. Low complexity predominate over residues 1123–1142 (DSTATESASSSVMSPSFSSE).

Expressed in testis and in tumors of a wide variety of histologic types.

The protein localises to the cytoplasm. This is Melanoma-associated antigen C1 (MAGEC1) from Homo sapiens (Human).